Reading from the N-terminus, the 254-residue chain is MQIDLNADLGEGCGSDEALLDLVTSANIACGWHAGGANAMRDCVRWAVQKGVAIGAHPSFHDPENFGRKEMQLPASDIYAGVLYQLGALSAIAQAEGGRIAHVKPHGALYNQAARDPMIADAVVSAIRDFDPSLAVFGLANSVFVAAARHAGLAAVEEVFADRGYRADGSLVPRNQPGALIDDEDTMIARTLDMVRSRQVRAIGGEWVMLNAQTVCLHGDGPHALVFAKRIRAALEAVGVDVVAPGMLQADERA.

This sequence belongs to the LamB/PxpA family. As to quaternary structure, forms a complex composed of PxpA, PxpB and PxpC.

The catalysed reaction is 5-oxo-L-proline + ATP + 2 H2O = L-glutamate + ADP + phosphate + H(+). Catalyzes the cleavage of 5-oxoproline to form L-glutamate coupled to the hydrolysis of ATP to ADP and inorganic phosphate. This is 5-oxoprolinase subunit A from Burkholderia lata (strain ATCC 17760 / DSM 23089 / LMG 22485 / NCIMB 9086 / R18194 / 383).